A 289-amino-acid polypeptide reads, in one-letter code: Ribosomal protein L11 methyltransferase (289 aa).

Positions 135, 156, 179, and 225 each coordinate S-adenosyl-L-methionine.

The protein belongs to the methyltransferase superfamily. PrmA family.

The protein localises to the cytoplasm. The enzyme catalyses L-lysyl-[protein] + 3 S-adenosyl-L-methionine = N(6),N(6),N(6)-trimethyl-L-lysyl-[protein] + 3 S-adenosyl-L-homocysteine + 3 H(+). Methylates ribosomal protein L11. The polypeptide is Ribosomal protein L11 methyltransferase (Chlorobaculum parvum (strain DSM 263 / NCIMB 8327) (Chlorobium vibrioforme subsp. thiosulfatophilum)).